Reading from the N-terminus, the 468-residue chain is 6-phosphogluconate dehydrogenase, NAD(+)-dependent, decarboxylating (468 aa).

NAD(+) is bound by residues 9–14, 32–34, 73–75, and N101; these read GLGVMG, NYT, and VTA. Substrate contacts are provided by residues N101 and 127–129; that span reads SGG. The active-site Proton acceptor is K181. 184-185 provides a ligand contact to substrate; the sequence is HN. Residue E188 is the Proton donor of the active site. The substrate site is built by Y189, K259, R286, R445, and H451.

The protein belongs to the 6-phosphogluconate dehydrogenase family. In terms of assembly, homodimer.

It carries out the reaction 6-phospho-D-gluconate + NAD(+) = D-ribulose 5-phosphate + CO2 + NADH. Functionally, catalyzes the oxidative decarboxylation of 6-phosphogluconate to ribulose 5-phosphate and CO(2), with concomitant reduction of NAD to NADH. Does not contribute to oxidative pentose phosphate (PP) pathway fluxes during growth on glucose. The functional role of GntZ remains obscure. The protein is 6-phosphogluconate dehydrogenase, NAD(+)-dependent, decarboxylating (gntZ) of Bacillus subtilis (strain 168).